A 924-amino-acid polypeptide reads, in one-letter code: LPS-assembly protein LptD (924 aa).

The signal sequence occupies residues 1 to 33 (MAVKSLVFRRKFPLLVTGSLLALQPVAALTVQA). A disordered region spans residues 58–102 (NLPPRPAHTATSVSTAAAGSSVSGSGGETVEAEPTQRLVTESGGR). Positions 66 to 90 (TATSVSTAAAGSSVSGSGGETVEAE) are enriched in low complexity.

Belongs to the LptD family. Component of the lipopolysaccharide transport and assembly complex. Interacts with LptE and LptA.

The protein resides in the cell outer membrane. Its function is as follows. Together with LptE, is involved in the assembly of lipopolysaccharide (LPS) at the surface of the outer membrane. The sequence is that of LPS-assembly protein LptD from Pseudomonas aeruginosa (strain UCBPP-PA14).